Consider the following 286-residue polypeptide: Beta-lactamase SHV-29 (286 aa).

Residues 1–21 (MRYIRLCIISLLATLPLAVHA) form the signal peptide. The active-site Acyl-ester intermediate is the Ser-66. A disulfide bridge connects residues Cys-73 and Cys-119. The active-site Proton acceptor is the Glu-164. Residue 230–232 (KTG) coordinates substrate.

It belongs to the class-A beta-lactamase family.

The enzyme catalyses a beta-lactam + H2O = a substituted beta-amino acid. This is Beta-lactamase SHV-29 (bla) from Klebsiella pneumoniae.